The primary structure comprises 310 residues: MEPGNYTVVTEVILLGFTEDAIIRAILFIVFLIIYSVTLMGNASIIMLIRRSPQLHTPMYLLLSHLAFVDIGYSSSVTPIMLKGFLRKETFILVSGCVAQLCSVVTFGSTECFLLAAMAYDRYVAICSPLLYATQMSSTVCILLVGASYLGGCVNAWTFTGCLLNLSFCRPNKVNHFFCDYSPLLKISCSHDFSSEVIPAISSGSIIVVTVFIIALSYVYILVSILKMRSTEGRQKAFSTCTSHLTAVTLFYGTITFIYVMPKSSYSTDQNKVVSVFYTVVIPMLNPIIYSLRNKDVKEAMKKLMANTHH.

Residues 1-25 (MEPGNYTVVTEVILLGFTEDAIIRA) are Extracellular-facing. A glycan (N-linked (GlcNAc...) asparagine) is linked at asparagine 5. A helical transmembrane segment spans residues 26–46 (ILFIVFLIIYSVTLMGNASII). At 47–54 (MLIRRSPQ) the chain is on the cytoplasmic side. Residues 55 to 75 (LHTPMYLLLSHLAFVDIGYSS) form a helical membrane-spanning segment. Residues 76 to 99 (SVTPIMLKGFLRKETFILVSGCVA) lie on the Extracellular side of the membrane. An intrachain disulfide couples cysteine 97 to cysteine 189. Residues 100-120 (QLCSVVTFGSTECFLLAAMAY) form a helical membrane-spanning segment. Residues 121–133 (DRYVAICSPLLYA) lie on the Cytoplasmic side of the membrane. The helical transmembrane segment at 134–154 (TQMSSTVCILLVGASYLGGCV) threads the bilayer. At 155-196 (NAWTFTGCLLNLSFCRPNKVNHFFCDYSPLLKISCSHDFSSE) the chain is on the extracellular side. The N-linked (GlcNAc...) asparagine glycan is linked to asparagine 165. A helical membrane pass occupies residues 197 to 217 (VIPAISSGSIIVVTVFIIALS). Residues 218-237 (YVYILVSILKMRSTEGRQKA) are Cytoplasmic-facing. A helical transmembrane segment spans residues 238 to 258 (FSTCTSHLTAVTLFYGTITFI). At 259–271 (YVMPKSSYSTDQN) the chain is on the extracellular side. A helical transmembrane segment spans residues 272–292 (KVVSVFYTVVIPMLNPIIYSL). Topologically, residues 293 to 310 (RNKDVKEAMKKLMANTHH) are cytoplasmic.

The protein belongs to the G-protein coupled receptor 1 family.

Its subcellular location is the cell membrane. In terms of biological role, potential odorant receptor. In Mus musculus (Mouse), this protein is Olfactory receptor 5P80.